The sequence spans 87 residues: Putative defensin-like protein 169 (87 aa).

The signal sequence occupies residues 1–21 (MKKTFSFTVLILFVIPLLVTG). Disulfide bonds link cysteine 36–cysteine 86, cysteine 48–cysteine 74, cysteine 53–cysteine 80, and cysteine 57–cysteine 82.

It belongs to the DEFL family.

The protein resides in the secreted. This chain is Putative defensin-like protein 169, found in Arabidopsis thaliana (Mouse-ear cress).